A 203-amino-acid polypeptide reads, in one-letter code: NADH-quinone oxidoreductase subunit C (203 aa).

The protein belongs to the complex I 30 kDa subunit family. In terms of assembly, NDH-1 is composed of 14 different subunits. Subunits NuoB, C, D, E, F, and G constitute the peripheral sector of the complex.

It is found in the cell inner membrane. The catalysed reaction is a quinone + NADH + 5 H(+)(in) = a quinol + NAD(+) + 4 H(+)(out). NDH-1 shuttles electrons from NADH, via FMN and iron-sulfur (Fe-S) centers, to quinones in the respiratory chain. The immediate electron acceptor for the enzyme in this species is believed to be ubiquinone. Couples the redox reaction to proton translocation (for every two electrons transferred, four hydrogen ions are translocated across the cytoplasmic membrane), and thus conserves the redox energy in a proton gradient. The chain is NADH-quinone oxidoreductase subunit C from Bartonella tribocorum (strain CIP 105476 / IBS 506).